The sequence spans 313 residues: Porphobilinogen deaminase (313 aa).

Cys-241 is modified (S-(dipyrrolylmethanemethyl)cysteine).

This sequence belongs to the HMBS family. In terms of assembly, monomer. Dipyrromethane is required as a cofactor.

The catalysed reaction is 4 porphobilinogen + H2O = hydroxymethylbilane + 4 NH4(+). It functions in the pathway porphyrin-containing compound metabolism; protoporphyrin-IX biosynthesis; coproporphyrinogen-III from 5-aminolevulinate: step 2/4. Its pathway is porphyrin-containing compound metabolism; chlorophyll biosynthesis. Functionally, tetrapolymerization of the monopyrrole PBG into the hydroxymethylbilane pre-uroporphyrinogen in several discrete steps. This chain is Porphobilinogen deaminase, found in Chlorobium chlorochromatii (strain CaD3).